The chain runs to 418 residues: Actin-related protein 3B (418 aa).

This sequence belongs to the actin family. ARP3 subfamily. In terms of assembly, interacts with the Arp2/3 complex composed of ARP2, ARP3, ARPC1B, ARPC1B/p41-ARC, ARPC2/p34-ARC, ARPC3/p21-ARC, ARPC4/p20-ARC and ARPC5/p16-ARC. Detected in fetal brain. Detected throughout the adult brain, in neurons from gray matter, but not in white matter. Detected in liver, skeletal muscle and pancreas. Detected in lung adenocarcinoma cells with low metastatic potential, but not in lung adenocarcinoma cells with high metastatic potential.

Its subcellular location is the cytoplasm. The protein resides in the cytoskeleton. It is found in the cell projection. In terms of biological role, plays a role in the organization of the actin cytoskeleton. May function as ATP-binding component of the Arp2/3 complex which is involved in regulation of actin polymerization and together with an activating nucleation-promoting factor (NPF) mediates the formation of branched actin networks. May decrease the metastatic potential of tumors. In Homo sapiens (Human), this protein is Actin-related protein 3B (ACTR3B).